The chain runs to 366 residues: Quinolinate synthase (366 aa).

Residues His44 and Ser61 each contribute to the iminosuccinate site. Position 108 (Cys108) interacts with [4Fe-4S] cluster. Residues 139–141 (YIN) and Ser160 each bind iminosuccinate. A [4Fe-4S] cluster-binding site is contributed by Cys228. Residues 254–256 (HPE) and Thr271 each bind iminosuccinate. A [4Fe-4S] cluster-binding site is contributed by Cys318.

The protein belongs to the quinolinate synthase family. Type 3 subfamily. [4Fe-4S] cluster is required as a cofactor.

The protein localises to the cytoplasm. The enzyme catalyses iminosuccinate + dihydroxyacetone phosphate = quinolinate + phosphate + 2 H2O + H(+). It functions in the pathway cofactor biosynthesis; NAD(+) biosynthesis; quinolinate from iminoaspartate: step 1/1. In terms of biological role, catalyzes the condensation of iminoaspartate with dihydroxyacetone phosphate to form quinolinate. This is Quinolinate synthase from Listeria innocua serovar 6a (strain ATCC BAA-680 / CLIP 11262).